The sequence spans 723 residues: Hypoxia-inducible factor prolyl hydroxylase (723 aa).

Residues Cys39, Cys42, Cys54, Cys57, Cys63, His67, His75, and Cys79 each coordinate Zn(2+). The MYND-type; atypical zinc-finger motif lies at 39 to 79; sequence CTYCGSSCTSSQLQTCLFCGTVAYCSKEHQQLDWLTHKMIC. Residues 249–270 are compositionally biased toward low complexity; that stretch reads PSTASTATIPPPATTTSSATSS. Disordered regions lie at residues 249–275 and 294–323; these read PSTASTATIPPPATTTSSATSSGKSET and IETEGGSKPTVSRTRKRPTPSNSADPKINY. In terms of domain architecture, Fe2OG dioxygenase spans 468–566; sequence GRSRAMLAIY…RFAITIWYMD (99 aa). 3 residues coordinate Fe cation: His487, Asp489, and His548. Arg557 serves as a coordination point for 2-oxoglutarate. A disordered region spans residues 678 to 723; that stretch reads RTTSLQSISDHFRSERSHERRSSTSSDQDLDEGLPPPPSTNPEYYI. The segment covering 687–699 has biased composition (basic and acidic residues); the sequence is DHFRSERSHERRS.

As to quaternary structure, interacts (via catalytic domain) with lin-10 (via N-terminus); the interaction regulates lin-10 subcellular localization; the interaction is direct. Interacts (via catalytic domain) with swan-1 (via WD 1-3 repeats); the interaction may regulate vhl-1-independent hif-1 transcriptional activity; the interaction is direct. Interacts (via C-terminus) with cysl-1; the interaction is enhanced by hydrogen disulfide and activates hif-1-mediated transcription; the interaction is direct. Fe(2+) serves as cofactor. L-ascorbate is required as a cofactor. In terms of tissue distribution, in larvae and adults, expressed in pharyngeal and body wall muscles.

The protein localises to the cytoplasm. The protein resides in the nucleus. It localises to the cell projection. Its subcellular location is the dendrite. It is found in the axon. It carries out the reaction L-prolyl-[hypoxia-inducible factor alpha subunit] + 2-oxoglutarate + O2 = trans-4-hydroxy-L-prolyl-[hypoxia-inducible factor alpha subunit] + succinate + CO2. With respect to regulation, inhibited by Co(2+) and dimethyloxalylglycine. Inhibited by the iron chelator 2, 2'-dipyridyl. Functionally, cellular oxygen sensor which regulates the stability and the activity of hypoxia-inducible transcription factor, hif-1. In normoxic conditions, hydroxylates hif-1 targeting it for vhl-1-mediated proteasomal degradation. In addition, regulates hif-1 transcriptional activity in a vhl-1-independent manner and independently of its hydroxylase activity. By regulating hif-1 activity, controls several cellular responses. Mediates susceptibility to B.thuringiensis and V.cholerae pore-forming toxins and enteropathogenic E.coli. Mediates susceptibility to P.aeruginosa PAO1-mediated killing by regulating resistance to cyanide produced by P.aeruginosa. Mediates resistance to S.aureus-mediated killing. In addition, plays a role in heat acclimation, neuronal development, behavioral responses to reoxygenation and hydrogen sulfide, iron homeostasis and aging. In neurons, involved in mitochondrion fusion during reoxygenation. Involved in egg laying. Regulates the trafficking of the glutamate receptor glr-1, probably independently of hif-1, by regulating lin-10 subcellular localization in response to oxygen levels. May hydroxylate lin-10. The protein is Hypoxia-inducible factor prolyl hydroxylase of Caenorhabditis elegans.